We begin with the raw amino-acid sequence, 255 residues long: Sorbose reductase sou1 (255 aa).

2 residues coordinate NADP(+): isoleucine 21 and asparagine 95. Residues serine 148 and tyrosine 163 each act as proton donor in the active site. NADP(+) contacts are provided by tyrosine 163, lysine 167, isoleucine 195, and threonine 197. Catalysis depends on lysine 167, which acts as the Lowers pKa of active site Tyr.

Belongs to the short-chain dehydrogenases/reductases (SDR) family.

It catalyses the reaction D-sorbitol + NADP(+) = keto-L-sorbose + NADPH + H(+). Functionally, catalyzes the NADP dependent reduction of L-sorbose to D-glucitol. This chain is Sorbose reductase sou1 (sou1), found in Schizosaccharomyces pombe (strain 972 / ATCC 24843) (Fission yeast).